A 333-amino-acid chain; its full sequence is N-acetyl-gamma-glutamyl-phosphate reductase (333 aa).

C136 is an active-site residue.

The protein belongs to the NAGSA dehydrogenase family. Type 1 subfamily.

Its subcellular location is the cytoplasm. It catalyses the reaction N-acetyl-L-glutamate 5-semialdehyde + phosphate + NADP(+) = N-acetyl-L-glutamyl 5-phosphate + NADPH + H(+). It participates in amino-acid biosynthesis; L-arginine biosynthesis; N(2)-acetyl-L-ornithine from L-glutamate: step 3/4. Functionally, catalyzes the NADPH-dependent reduction of N-acetyl-5-glutamyl phosphate to yield N-acetyl-L-glutamate 5-semialdehyde. The chain is N-acetyl-gamma-glutamyl-phosphate reductase from Xylella fastidiosa (strain 9a5c).